The sequence spans 1501 residues: Neither inactivation nor afterpotential protein C (1501 aa).

The 267-residue stretch at 16–282 folds into the Protein kinase domain; it reads FEIYEEIAQG…MVEMVEHPFL (267 aa). ATP is bound by residues 22–30 and Lys-45; that span reads IAQGVNAKV. The active-site Proton acceptor is Asp-145. Position 183 is a phosphoserine (Ser-183). The Myosin motor domain occupies 332-1037; the sequence is MYPEDLAALE…FLARLYELQV (706 aa). Residues 913–934 are actin-binding; it reads LTLLKMLSQNANLGVHFVRCIR. IQ domains lie at 1036 to 1065 and 1072 to 1101; these read QVKK…FKLG and HDVA…EKSG. An interaction with rtp region spans residues 1043–1271; sequence VQSMMRALLA…RMGESDNIYN (229 aa). The non alpha-helical, C-terminal domain stretch occupies residues 1066-1501; it reads KKGPEHHDVA…ITLSGYAVDI (436 aa). Disordered stretches follow at residues 1308–1364 and 1390–1473; these read NWGV…DPVR and KTNY…EDSN. Residues 1326 to 1335 show a composition bias toward pro residues; sequence APPPPPPPMP. Positions 1336 to 1358 are enriched in low complexity; the sequence is SSNYYRNNPNQQQRNYQQRSSYP. The span at 1405-1414 shows a compositional bias: basic and acidic residues; that stretch reads NNRRGSDSGD. A compositionally biased stretch (polar residues) spans 1449–1463; the sequence is FGQQQRAPTLRQSPA.

This sequence in the C-terminal section; belongs to the TRAFAC class myosin-kinesin ATPase superfamily. Myosin family. In the N-terminal section; belongs to the protein kinase superfamily. Ser/Thr protein kinase family. In terms of assembly, interacts with rtp. Expressed in the phototransducing compartment of photoreceptor cells, the rhabdomeres (at protein level).

Its subcellular location is the cytoplasm. It localises to the cytoskeleton. The protein localises to the nucleus. The protein resides in the membrane. It is found in the cell projection. Its subcellular location is the rhabdomere membrane. It carries out the reaction L-seryl-[protein] + ATP = O-phospho-L-seryl-[protein] + ADP + H(+). The catalysed reaction is L-threonyl-[protein] + ATP = O-phospho-L-threonyl-[protein] + ADP + H(+). In terms of biological role, required for photoreceptor cell function. The ninaC proteins combines putative serine/threonine-protein kinase and myosin activities. Essential for the expression and stability of the rtp protein in the photoreceptors. The rtp/ninaC complex is required for stability of inad and inac and the normal termination of phototransduction in the retina. In Drosophila melanogaster (Fruit fly), this protein is Neither inactivation nor afterpotential protein C (ninaC).